Reading from the N-terminus, the 967-residue chain is Phosphoenolpyruvate carboxylase 2 (967 aa).

A Phosphoserine modification is found at S13. Active-site residues include H174 and K602.

It belongs to the PEPCase type 1 family. In terms of assembly, homotetramer. The cofactor is Mg(2+).

Its subcellular location is the cytoplasm. The enzyme catalyses oxaloacetate + phosphate = phosphoenolpyruvate + hydrogencarbonate. Its pathway is photosynthesis; C3 acid pathway. With respect to regulation, by light-reversible phosphorylation. In terms of biological role, through the carboxylation of phosphoenolpyruvate (PEP) it forms oxaloacetate, a four-carbon dicarboxylic acid source for the tricarboxylic acid cycle. This Zea mays (Maize) protein is Phosphoenolpyruvate carboxylase 2 (PEP4).